The chain runs to 181 residues: Putative D-tyrosyl-tRNA(Tyr) deacylase 2 (181 aa).

Belongs to the DTD family. Highly divergent. In terms of assembly, homodimer.

It is found in the cytoplasm. Its function is as follows. May hydrolyze D-tyrosyl-tRNA(Tyr) into D-tyrosine and free tRNA(Tyr). Could be a defense mechanism against a harmful effect of D-tyrosine. This chain is Putative D-tyrosyl-tRNA(Tyr) deacylase 2, found in Leishmania major.